Here is a 573-residue protein sequence, read N- to C-terminus: MCSISFINLISISLTCFLLSLYYLLNNMVYFIEWEVVSLNSMSIVMTFLFDWMSLLFMSFVLMIASLVIFYSKEYMESDENINRFIMLVLMFVLSMMLLIISPNLVSILLGWDGLGLVSYCLVIYFQNIKSYNAGMLTALSNRIGDVALLLAIAWMLNYGSWNYIFYLEVMQNEFSMLMIGSLVMLAAMTKSAQIPFSSWLPAAMAAPTPVSALVHSSTLVTAGVYLLIRFNIVLSTSWLGQLLLLLSGLTMFMAGLGANFEFDLKKIIALSTLSQLGLMMSILSMGFYKLAMFHLLTHALFKALLFMCAGAIIHNMNNSQDIRLMGGLSIHMPLTSACFNVSNLALCGMPFLAGFYSKDMILEIVSISNINMFSFFLYFFSTGLTVSYSFRLVYYSMTGDLNCGSLNMLNDESWVMLRGMLGLLFMSIIGGSMLNWLIFPFPYMICLPGYLKMLTLFVCIVGGLFGYLISISNLYSLNKSLLNYNLTLFLGSMWFMPYISTYGMIFYPLNYGQLVVKSFDQGWSEYFGGQHLYYKLSNYSKTLFLMHNNSLKIYLMLFVFWIMILFSFLLFL.

16 consecutive transmembrane segments (helical) span residues 4–24 (ISFI…LYYL), 44–64 (IVMT…VLMI), 85–105 (FIML…SPNL), 106–126 (VSIL…VIYF), 147–167 (VALL…YIFY), 170–190 (VMQN…AAMT), 212–234 (SALV…FNIV), 239–259 (WLGQ…GLGA), 268–288 (IIAL…SMGF), 294–314 (FHLL…GAII), 337–357 (SACF…AGFY), 377–396 (FLYF…LVYY), 422–442 (LGLL…IFPF), 452–472 (LKML…LISI), 487–507 (LTLF…GMIF), and 552–572 (LKIY…FLLF).

This sequence belongs to the complex I subunit 5 family.

The protein resides in the mitochondrion inner membrane. It catalyses the reaction a ubiquinone + NADH + 5 H(+)(in) = a ubiquinol + NAD(+) + 4 H(+)(out). Core subunit of the mitochondrial membrane respiratory chain NADH dehydrogenase (Complex I) that is believed to belong to the minimal assembly required for catalysis. Complex I functions in the transfer of electrons from NADH to the respiratory chain. The immediate electron acceptor for the enzyme is believed to be ubiquinone. The protein is NADH-ubiquinone oxidoreductase chain 5 (mt:ND5) of Drosophila yakuba (Fruit fly).